Here is an 85-residue protein sequence, read N- to C-terminus: Large ribosomal subunit protein bL27 (85 aa).

Residues 1–22 (MAHKKAGGSTRNGRDSESKRLG) are disordered.

Belongs to the bacterial ribosomal protein bL27 family.

In Aliivibrio salmonicida (strain LFI1238) (Vibrio salmonicida (strain LFI1238)), this protein is Large ribosomal subunit protein bL27.